Consider the following 315-residue polypeptide: tRNA dimethylallyltransferase (315 aa).

13–20 (GPTAVGKT) is a binding site for ATP. 15-20 (TAVGKT) contributes to the substrate binding site. Positions 38 to 41 (DSRL) are interaction with substrate tRNA.

The protein belongs to the IPP transferase family. In terms of assembly, monomer. The cofactor is Mg(2+).

It carries out the reaction adenosine(37) in tRNA + dimethylallyl diphosphate = N(6)-dimethylallyladenosine(37) in tRNA + diphosphate. In terms of biological role, catalyzes the transfer of a dimethylallyl group onto the adenine at position 37 in tRNAs that read codons beginning with uridine, leading to the formation of N6-(dimethylallyl)adenosine (i(6)A). The protein is tRNA dimethylallyltransferase of Herpetosiphon aurantiacus (strain ATCC 23779 / DSM 785 / 114-95).